Reading from the N-terminus, the 224-residue chain is BTB/POZ domain-containing protein At5g48510 (224 aa).

Residues 24-98 (VDVMLKAKNS…ICSDGSMLSA (75 aa)) form the BTB domain.

In terms of assembly, interacts with CUL3A.

Its pathway is protein modification; protein ubiquitination. May act as a substrate-specific adapter of an E3 ubiquitin-protein ligase complex (CUL3-RBX1-BTB) which mediates the ubiquitination and subsequent proteasomal degradation of target proteins. The sequence is that of BTB/POZ domain-containing protein At5g48510 from Arabidopsis thaliana (Mouse-ear cress).